The primary structure comprises 327 residues: Golgi to ER traffic protein 4 homolog (327 aa).

N-acetylalanine is present on A2. S12 carries the post-translational modification Phosphoserine. Residues 195–271 form an interacts with BAG6 region; that stretch reads FVAQAVLQFL…YQPSLRRDPM (77 aa). Positions 307–327 are disordered; that stretch reads GSSEQEDGEESPSDGSPIELD.

It belongs to the GET4 family. As to quaternary structure, component of the BAG6/BAT3 complex, at least composed of BAG6, UBL4A and GET4/TRC35. Interacts with BAG6; the interaction is direct and localizes BAG6 to the cytosol. Interacts with GET3. Ubiquitinated by RNF12, leading to proteasomal degradation. When unassembled from BAG6; ubiquitinylation is modulated by BAG6 quality control role and effectuated by RNF126.

It localises to the cytoplasm. It is found in the cytosol. Functionally, as part of a cytosolic protein quality control complex, the BAG6/BAT3 complex, maintains misfolded and hydrophobic patches-containing proteins in a soluble state and participates in their proper delivery to the endoplasmic reticulum or alternatively can promote their sorting to the proteasome where they undergo degradation. The BAG6/BAT3 complex is involved in the post-translational delivery of tail-anchored/type II transmembrane proteins to the endoplasmic reticulum membrane. Recruited to ribosomes, it interacts with the transmembrane region of newly synthesized tail-anchored proteins and together with SGTA and ASNA1 mediates their delivery to the endoplasmic reticulum. Client proteins that cannot be properly delivered to the endoplasmic reticulum are ubiquitinated and sorted to the proteasome. Similarly, the BAG6/BAT3 complex also functions as a sorting platform for proteins of the secretory pathway that are mislocalized to the cytosol either delivering them to the proteasome for degradation or to the endoplasmic reticulum. The BAG6/BAT3 complex also plays a role in the endoplasmic reticulum-associated degradation (ERAD), a quality control mechanism that eliminates unwanted proteins of the endoplasmic reticulum through their retrotranslocation to the cytosol and their targeting to the proteasome. It maintains these retrotranslocated proteins in an unfolded yet soluble state condition in the cytosol to ensure their proper delivery to the proteasome. This chain is Golgi to ER traffic protein 4 homolog, found in Homo sapiens (Human).